A 1474-amino-acid chain; its full sequence is Alpha-2-macroglobulin-P (1474 aa).

The first 32 residues, 1 to 32 (MGKRWLPSLALLPLPPPLLLLLLLLLPTNASA), serve as a signal peptide directing secretion. Cysteines 55 and 93 form a disulfide. 3 N-linked (GlcNAc...) asparagine glycosylation sites follow: Asn-62, Asn-77, and Asn-253. 2 disulfide bridges follow: Cys-257/Cys-305 and Cys-275/Cys-293. A glycan (N-linked (GlcNAc...) asparagine) is linked at Asn-402. Intrachain disulfides connect Cys-476-Cys-569, Cys-601-Cys-771, and Cys-650-Cys-697. Residues 623–752 (LVYDLLPVKD…LVIVDSTGVA (130 aa)) form a bait region region. Asn-654 and Asn-774 each carry an N-linked (GlcNAc...) asparagine glycan. 5 disulfide bridges follow: Cys-821-Cys-849, Cys-847-Cys-883, Cys-921-Cys-1321, Cys-1079-Cys-1127, and Cys-1352-Cys-1467. Residue Asn-869 is glycosylated (N-linked (GlcNAc...) asparagine). The isoglutamyl cysteine thioester (Cys-Gln) cross-link spans 972 to 975 (CGEQ). N-linked (GlcNAc...) asparagine glycosylation occurs at Asn-991. Asn-1366 is a glycosylation site (N-linked (GlcNAc...) asparagine).

Belongs to the protease inhibitor I39 (alpha-2-macroglobulin) family. Homotetramer; disulfide-linked. As to expression, expressed in uterus, mesometrial lymphoid aggregate and mammary tissue during pregnancy. Expressed in ovary, testis and kidney. Low level expression in heart. Not expressed in liver.

It is found in the secreted. Functionally, is able to inhibit all four classes of proteinases by a unique 'trapping' mechanism. This protein has a peptide stretch, called the 'bait region' which contains specific cleavage sites for different proteinases. When a proteinase cleaves the bait region, a conformational change is induced in the protein which traps the proteinase. The entrapped enzyme remains active against low molecular weight substrates (activity against high molecular weight substrates is greatly reduced). Following cleavage in the bait region a thioester bond is hydrolyzed and mediates the covalent binding of the protein to the proteinase. The polypeptide is Alpha-2-macroglobulin-P (Mus musculus (Mouse)).